A 208-amino-acid chain; its full sequence is GATA transcription factor 29 (208 aa).

Residues 155-208 form a GATA-type; atypical zinc finger; sequence GMKKCTNMNCNALNTPMWRRGPLGPKSLCNACGIKFRKEEERKAKRNVVIVLDD.

This sequence belongs to the type IV zinc-finger family. Class B subfamily.

It is found in the nucleus. Functionally, transcriptional regulator that specifically binds 5'-GATA-3' or 5'-GAT-3' motifs within gene promoters. The polypeptide is GATA transcription factor 29 (GATA29) (Arabidopsis thaliana (Mouse-ear cress)).